Consider the following 566-residue polypeptide: Transcription factor opdL (566 aa).

Positions C15 to C45 form a DNA-binding region, zn(2)-C6 fungal-type.

It localises to the nucleus. Its function is as follows. Transcription factor; part of the gene cluster that mediates the biosynthesis of oxopyrrolidines, polyketide-amino acid hybrid compounds with feature structures of tetramic acid. The sequence is that of Transcription factor opdL from Penicillium oxalicum (strain 114-2 / CGMCC 5302) (Penicillium decumbens).